Reading from the N-terminus, the 737-residue chain is MPPKSPNRSGKSTPTRGRPGEKKDEEKLLQDEEEERLRLEQEEKARQEKEAREKLEQERRAELDTKKDKQVFETNIELGAVKLEVEQVKNDKLAHAEWNRYMKCDGKPDPTSVKEINTFISLSHEKGSPDVNIVLEDAKLILSLISDLNELLEDFTPEEFEQKVDSYRQTILSLQDLLLNRYNEATLKMLKEASYEADSESGNLQKVVDGENETIMLWANLNKNPRFKLFEFENEKISFELPKVLAMADIAVRILRTKFDHYSHQCTTFLPKKKKVKDEEPIPEEPPKPEDAEEVEVKGDEENGEDAKSVVEEGRQSKQSNEPGLVNEGEKEEETKKDENEGEKEDAVKTPDVQIEIEDDEEEILDPDVVDLRQFSPLGGVYHVDLLKTPPQPNIVRGWTLTQIIDKPLSTVKYPSDNPNTGRSSSRVASANPEGRDEGSPSKTPLEQQQPPIGLTFALPSNVMFFEEPQVASWDSSDKHWKTSGITDTNFDEENRKLLFKTQEFGTFCLMQDSHLNMPFQSWELKPKGTNSTVLTITAAIAEVEIEVKDSKCRLNAPAEDPPKELSGLYGKWMAVPKLIAAMRDAGVNVFPAEDSHKFVSIQSKEVDLERVYEQMAILSSTFAFSWSKWNNDAGSKQVIIQIAPCLIKENVPRDAVSDDDWSIFSVSDDMSYKLALSEYDEEFADVVAKGATYHCDLLHAQYERQPLKTATKNCWNNSPKNHKTRTSFSFTRLPHY.

The segment covering 1 to 15 (MPPKSPNRSGKSTPT) has biased composition (polar residues). Disordered stretches follow at residues 1-61 (MPPK…ERRA), 274-362 (KKVK…DDEE), and 410-452 (STVK…QQPP). 3 stretches are compositionally biased toward basic and acidic residues: residues 18-61 (RPGE…ERRA), 276-316 (VKDE…EGRQ), and 333-349 (EETKKDENEGEKEDAVK). Polar residues-rich tracts occupy residues 417–429 (DNPNTGRSSSRVA) and 441–451 (PSKTPLEQQQP).

The protein belongs to the DNAI7 family.

This Ciona intestinalis (Transparent sea squirt) protein is Dynein axonemal intermediate chain 7 homolog (AXP83.9).